Reading from the N-terminus, the 341-residue chain is tRNA N6-adenosine threonylcarbamoyltransferase (341 aa).

Fe cation is bound by residues H111 and H115. Residues 133 to 137, D166, G179, D183, and N273 contribute to the substrate site; that span reads AVSGG. D301 contacts Fe cation.

It belongs to the KAE1 / TsaD family. Requires Fe(2+) as cofactor.

The protein resides in the cytoplasm. The catalysed reaction is L-threonylcarbamoyladenylate + adenosine(37) in tRNA = N(6)-L-threonylcarbamoyladenosine(37) in tRNA + AMP + H(+). Functionally, required for the formation of a threonylcarbamoyl group on adenosine at position 37 (t(6)A37) in tRNAs that read codons beginning with adenine. Is involved in the transfer of the threonylcarbamoyl moiety of threonylcarbamoyl-AMP (TC-AMP) to the N6 group of A37, together with TsaE and TsaB. TsaD likely plays a direct catalytic role in this reaction. In Geobacter metallireducens (strain ATCC 53774 / DSM 7210 / GS-15), this protein is tRNA N6-adenosine threonylcarbamoyltransferase.